The chain runs to 152 residues: Transcriptional regulator MraZ (152 aa).

2 consecutive SpoVT-AbrB domains span residues 5-52 and 81-124; these read ASAI…PIHE and AHEV…DEQA.

The protein belongs to the MraZ family. Forms oligomers.

It is found in the cytoplasm. The protein localises to the nucleoid. The polypeptide is Transcriptional regulator MraZ (Shewanella putrefaciens (strain CN-32 / ATCC BAA-453)).